A 639-amino-acid polypeptide reads, in one-letter code: Threonine--tRNA ligase (639 aa).

The region spanning methionine 1–threonine 62 is the TGS domain. The segment at aspartate 246–proline 537 is catalytic. Residues cysteine 337, histidine 388, and histidine 514 each coordinate Zn(2+).

This sequence belongs to the class-II aminoacyl-tRNA synthetase family. Homodimer. Requires Zn(2+) as cofactor.

Its subcellular location is the cytoplasm. The catalysed reaction is tRNA(Thr) + L-threonine + ATP = L-threonyl-tRNA(Thr) + AMP + diphosphate + H(+). Its function is as follows. Catalyzes the attachment of threonine to tRNA(Thr) in a two-step reaction: L-threonine is first activated by ATP to form Thr-AMP and then transferred to the acceptor end of tRNA(Thr). Also edits incorrectly charged L-seryl-tRNA(Thr). The protein is Threonine--tRNA ligase of Leptospira borgpetersenii serovar Hardjo-bovis (strain JB197).